The chain runs to 449 residues: C4-dicarboxylate transport protein (449 aa).

Helical transmembrane passes span 18–38, 61–81, 93–113, 159–179, 202–222, 244–264, 346–366, and 369–389; these read PFYLQLYFWVIIAIILGALLG, MIISPVIFLTIVTGIASVAHV, VYFLFFSTLALLLGLVVAHVV, FVGDNILQVLFVAVLFGIALA, LVQMLMKMAPIGAFGAIAFTI, SLLFVLVILGAVSWLCGFSIL, LFLVAMLSSKGAAGVSGAGFI, and AATLAVVPEVPIAGMALILGV.

This sequence belongs to the dicarboxylate/amino acid:cation symporter (DAACS) (TC 2.A.23) family.

It is found in the cell inner membrane. Functionally, responsible for the transport of dicarboxylates such as succinate, fumarate, and malate from the periplasm across the membrane. The polypeptide is C4-dicarboxylate transport protein (Xylella fastidiosa (strain M23)).